Reading from the N-terminus, the 315-residue chain is Calumenin (315 aa).

A signal peptide spans 1–19 (MDLRQFLLCLSLCTAFALS). Residue Y47 is modified to Phosphotyrosine. T65 is modified (phosphothreonine). 6 consecutive EF-hand domains span residues 68–103 (ESKE…AQKR), 104–139 (WIHE…YVLD), 151–186 (QMMV…DEYD), 188–223 (MKDI…HDGN), 229–264 (WVKT…SDYD), and 265–300 (HAEA…FVGS). S69 carries the post-translational modification Phosphoserine. 8 residues coordinate Ca(2+): D81, D83, D85, E92, D117, N119, D121, and E128. N-linked (GlcNAc...) asparagine glycosylation is present at N131. D164 provides a ligand contact to Ca(2+). K165 is subject to N6-acetyllysine. Ca(2+) is bound by residues D166, D168, E175, D201, N203, D205, E212, D242, N244, D246, R248, and E253. T254 is modified (phosphothreonine). S261 and S277 each carry phosphoserine. Ca(2+) contacts are provided by D278, N280, D282, K284, and E289. A Prevents secretion from ER motif is present at residues 312 to 315 (HDEF).

It belongs to the CREC family. As to quaternary structure, interacts with GGCX.

It localises to the endoplasmic reticulum membrane. Its subcellular location is the golgi apparatus. The protein resides in the secreted. The protein localises to the melanosome. It is found in the sarcoplasmic reticulum lumen. Its function is as follows. Involved in regulation of vitamin K-dependent carboxylation of multiple N-terminal glutamate residues. Seems to inhibit gamma-carboxylase GGCX. Binds 7 calcium ions with a low affinity. The chain is Calumenin (CALU) from Mesocricetus auratus (Golden hamster).